The chain runs to 430 residues: Dihydrolipoyllysine-residue acetyltransferase component of pyruvate dehydrogenase complex (430 aa).

Positions 2-77 (AFEFRLPDIG…VVGDVIVKID (76 aa)) constitute a Lipoyl-binding domain. At Lys43 the chain carries N6-lipoyllysine. Positions 80-122 (DAEDMQFKGHDDDSSSKEEPAKEEAPAEQAPVATQTEEVDENR) are disordered. The span at 84-104 (MQFKGHDDDSSSKEEPAKEEA) shows a compositional bias: basic and acidic residues. Residues 125–162 (KAMPSVRKYAREKGVNIKAVSGSGKNGRITKEDVDAYL) form the Peripheral subunit-binding (PSBD) domain. Residues 165–199 (GAPTASNESAASATNEEVAETPAAPAAVSLEGDFP) are disordered. The span at 168-192 (TASNESAASATNEEVAETPAAPAAV) shows a compositional bias: low complexity. His401 is an active-site residue.

Belongs to the 2-oxoacid dehydrogenase family. Forms a 24-polypeptide structural core with octahedral symmetry. (R)-lipoate is required as a cofactor.

The enzyme catalyses N(6)-[(R)-dihydrolipoyl]-L-lysyl-[protein] + acetyl-CoA = N(6)-[(R)-S(8)-acetyldihydrolipoyl]-L-lysyl-[protein] + CoA. The pyruvate dehydrogenase complex catalyzes the overall conversion of pyruvate to acetyl-CoA and CO(2). It contains multiple copies of three enzymatic components: pyruvate dehydrogenase (E1), dihydrolipoamide acetyltransferase (E2) and lipoamide dehydrogenase (E3). The polypeptide is Dihydrolipoyllysine-residue acetyltransferase component of pyruvate dehydrogenase complex (pdhC) (Staphylococcus aureus (strain MRSA252)).